A 719-amino-acid polypeptide reads, in one-letter code: Polyphosphate kinase (719 aa).

Residue Asn47 coordinates ATP. Residues Arg377 and Arg407 each contribute to the Mg(2+) site. The active-site Phosphohistidine intermediate is the His437. Residues Tyr470, Arg566, and His594 each coordinate ATP.

It belongs to the polyphosphate kinase 1 (PPK1) family. Requires Mg(2+) as cofactor. In terms of processing, an intermediate of this reaction is the autophosphorylated ppk in which a phosphate is covalently linked to a histidine residue through a N-P bond.

The catalysed reaction is [phosphate](n) + ATP = [phosphate](n+1) + ADP. In terms of biological role, catalyzes the reversible transfer of the terminal phosphate of ATP to form a long-chain polyphosphate (polyP). The protein is Polyphosphate kinase of Exiguobacterium sibiricum (strain DSM 17290 / CCUG 55495 / CIP 109462 / JCM 13490 / 255-15).